The sequence spans 446 residues: Tubulin beta-2 chain (446 aa).

GTP is bound by residues Gln-11, Glu-69, Ser-138, Gly-142, Thr-143, Gly-144, Asn-204, and Asn-226. Glu-69 is a binding site for Mg(2+). The segment at 424-446 is disordered; the sequence is QYQEATADEEGEFDEDEEGGGDE. Over residues 429 to 446 the composition is skewed to acidic residues; the sequence is TADEEGEFDEDEEGGGDE.

It belongs to the tubulin family. Dimer of alpha and beta chains. A typical microtubule is a hollow water-filled tube with an outer diameter of 25 nm and an inner diameter of 15 nM. Alpha-beta heterodimers associate head-to-tail to form protofilaments running lengthwise along the microtubule wall with the beta-tubulin subunit facing the microtubule plus end conferring a structural polarity. Microtubules usually have 13 protofilaments but different protofilament numbers can be found in some organisms and specialized cells. Requires Mg(2+) as cofactor.

Its subcellular location is the cytoplasm. It is found in the cytoskeleton. In terms of biological role, tubulin is the major constituent of microtubules, a cylinder consisting of laterally associated linear protofilaments composed of alpha- and beta-tubulin heterodimers. Microtubules grow by the addition of GTP-tubulin dimers to the microtubule end, where a stabilizing cap forms. Below the cap, tubulin dimers are in GDP-bound state, owing to GTPase activity of alpha-tubulin. This Drosophila erecta (Fruit fly) protein is Tubulin beta-2 chain (betaTub85D).